Consider the following 309-residue polypeptide: UDP-N-acetylenolpyruvoylglucosamine reductase (309 aa).

One can recognise an FAD-binding PCMH-type domain in the interval 25-188; sequence RVGGPADWLF…TSVTLQGNRE (164 aa). Arginine 168 is an active-site residue. The segment at 202 to 231 is disordered; that stretch reads AKRDATQPTKALTAGSTFRNPAGFSSTGQA. Residues 207-231 are compositionally biased toward polar residues; the sequence is TQPTKALTAGSTFRNPAGFSSTGQA. Residue serine 217 is the Proton donor of the active site. The active site involves glutamate 299.

It belongs to the MurB family. It depends on FAD as a cofactor.

The protein resides in the cytoplasm. The enzyme catalyses UDP-N-acetyl-alpha-D-muramate + NADP(+) = UDP-N-acetyl-3-O-(1-carboxyvinyl)-alpha-D-glucosamine + NADPH + H(+). It functions in the pathway cell wall biogenesis; peptidoglycan biosynthesis. Functionally, cell wall formation. The protein is UDP-N-acetylenolpyruvoylglucosamine reductase of Jannaschia sp. (strain CCS1).